Here is a 176-residue protein sequence, read N- to C-terminus: Ribosome maturation factor RimM (176 aa).

Residues aspartate 97–phenylalanine 176 form the PRC barrel domain.

The protein belongs to the RimM family. Binds ribosomal protein uS19.

The protein resides in the cytoplasm. An accessory protein needed during the final step in the assembly of 30S ribosomal subunit, possibly for assembly of the head region. Essential for efficient processing of 16S rRNA. May be needed both before and after RbfA during the maturation of 16S rRNA. It has affinity for free ribosomal 30S subunits but not for 70S ribosomes. The polypeptide is Ribosome maturation factor RimM (Shewanella denitrificans (strain OS217 / ATCC BAA-1090 / DSM 15013)).